The primary structure comprises 620 residues: Probable translation initiation factor IF-2 (620 aa).

Over residues 1–10 (MSDTDADADT) the composition is skewed to acidic residues. A disordered region spans residues 1–29 (MSDTDADADTDAVSTTETSMNADANANAD). Residues 11 to 29 (DAVSTTETSMNADANANAD) are compositionally biased toward low complexity. A tr-type G domain is found at 33 to 248 (LRTPIVAVLG…VLMGLSQRYM (216 aa)). Positions 42 to 49 (GHVDHGKT) are G1. 42–49 (GHVDHGKT) is a GTP binding site. A G2 region spans residues 67–71 (AITQH). The segment at 104 to 107 (DTPG) is G3. Residues 104 to 108 (DTPGH) and 158 to 161 (NKVD) each bind GTP. The tract at residues 158-161 (NKVD) is G4. Positions 162–183 (TTPGWTPTDGSPIQPTYESQPS) are enriched in polar residues. The disordered stretch occupies residues 162 to 185 (TTPGWTPTDGSPIQPTYESQPSAA). The interval 226–228 (SAI) is G5.

The protein belongs to the TRAFAC class translation factor GTPase superfamily. Classic translation factor GTPase family. IF-2 subfamily.

Its function is as follows. Function in general translation initiation by promoting the binding of the formylmethionine-tRNA to ribosomes. Seems to function along with eIF-2. This chain is Probable translation initiation factor IF-2, found in Haloquadratum walsbyi (strain DSM 16790 / HBSQ001).